A 588-amino-acid polypeptide reads, in one-letter code: Neuropeptide-like 1 (588 aa).

The propeptide occupies 1-179 (MQCIPKKTFM…DPEVLEYSPD (179 aa)). The interval 115-143 (NGDLPITIQERESDNDDEEKRSASSSDNV) is disordered. Thr194 is modified (threonine amide). Serine amide occurs at positions 210, 227, and 244. Tyr260 is subject to Tyrosine amide. Position 281 is a glutamic acid 1-amide (Glu281). A propeptide spanning residues 285 to 299 (SIASLARSGDWPSVA) is cleaved from the precursor. Position 318 is a tyrosine amide (Tyr318). Residues 321–588 (SLSDDREAPS…SNSHIAPRSM (268 aa)) constitute a propeptide that is removed on maturation. The tract at residues 342–382 (GNSEGKENEWQATPFTVSEDLDEGKAKNRSNRRIEASQTRH) is disordered.

It is found in the secreted. This is Neuropeptide-like 1 from Camponotus floridanus (Florida carpenter ant).